The sequence spans 362 residues: Stress response regulator protein 1 (362 aa).

Disordered regions lie at residues 1–39 (MTRLTRPMVRSPISLPSTPSQLLHSASLSSSPSSPSLVQ) and 163–188 (TLKSTVSTSTSTSTSTSTGTNTETKT). Residues 19–39 (PSQLLHSASLSSSPSSPSLVQ) show a composition bias toward low complexity. The Response regulatory domain occupies 209 to 327 (KFLLVDDNLI…LDFMANVIDE (119 aa)). At D260 the chain carries 4-aspartylphosphate.

Its function is as follows. Required for stress adaptation, morphogenesis and virulence. This Lodderomyces elongisporus (strain ATCC 11503 / CBS 2605 / JCM 1781 / NBRC 1676 / NRRL YB-4239) (Yeast) protein is Stress response regulator protein 1 (SRR1).